Reading from the N-terminus, the 419-residue chain is Glucose-1-phosphate adenylyltransferase (419 aa).

Residues Tyr-106, Gly-171, 186 to 187 (EK), and Ser-204 contribute to the alpha-D-glucose 1-phosphate site.

This sequence belongs to the bacterial/plant glucose-1-phosphate adenylyltransferase family. As to quaternary structure, homotetramer.

The enzyme catalyses alpha-D-glucose 1-phosphate + ATP + H(+) = ADP-alpha-D-glucose + diphosphate. The protein operates within glycan biosynthesis; glycogen biosynthesis. In terms of biological role, involved in the biosynthesis of ADP-glucose, a building block required for the elongation reactions to produce glycogen. Catalyzes the reaction between ATP and alpha-D-glucose 1-phosphate (G1P) to produce pyrophosphate and ADP-Glc. In Roseobacter denitrificans (strain ATCC 33942 / OCh 114) (Erythrobacter sp. (strain OCh 114)), this protein is Glucose-1-phosphate adenylyltransferase.